The chain runs to 808 residues: Sucrose synthase 1 (808 aa).

A GT-B glycosyltransferase region spans residues 277-754; it reads MVFNVVILSP…GLQRIEEKYT (478 aa).

It belongs to the glycosyltransferase 1 family. Plant sucrose synthase subfamily. As to quaternary structure, homotetramer. As to expression, expressed in the phloem of leaves and in roots. Detected in the whole plant but more precisely confined to the vasculature in cotyledons, mature leaves and siliques.

It catalyses the reaction an NDP-alpha-D-glucose + D-fructose = a ribonucleoside 5'-diphosphate + sucrose + H(+). Functionally, sucrose-cleaving enzyme that provides UDP-glucose and fructose for various metabolic pathways. This Arabidopsis thaliana (Mouse-ear cress) protein is Sucrose synthase 1 (SUS1).